A 1120-amino-acid chain; its full sequence is ISWI chromatin-remodeling complex ATPase ISW2 (1120 aa).

Positions 1–16 are enriched in basic and acidic residues; sequence MTTQQEEQRSDTKNSK. 2 disordered regions span residues 1-58 and 129-153; these read MTTQ…VEDR and LSKS…EDAE. Residues S17 and S19 each carry the phosphoserine modification. The segment covering 47 to 58 has biased composition (basic and acidic residues); that stretch reads LSDKEIYTVEDR. The region spanning 196–361 is the Helicase ATP-binding domain; that stretch reads ISLHENKLSG…WALLNFLLPD (166 aa). 209 to 216 provides a ligand contact to ATP; the sequence is DEMGLGKT. A DEAH box motif is present at residues 312-315; it reads DEAH. The Helicase C-terminal domain maps to 494–645; that stretch reads ILDKLLKRLK…QLVIQQGTGK (152 aa). Disordered regions lie at residues 764-783 and 828-853; these read GGGS…PRAP and NEGS…KGHE. S831 carries the post-translational modification Phosphoserine. The SANT domain occupies 886–938; sequence KAFTNWNKRDFMAFINACAKYGRDDMENIKKSIDSKTPEEVEVYAKIFWERLK. The tract at residues 1062–1120 is disordered; sequence PDANKKKRSRTSATREDTPLSQNESTRASTVPNLPTTMVTNQKDTNDHVDKRTKIDQEA. T1079 carries the phosphothreonine modification. Residues 1080–1104 show a composition bias toward polar residues; sequence PLSQNESTRASTVPNLPTTMVTNQK. S1082 is subject to Phosphoserine. Positions 1105–1120 are enriched in basic and acidic residues; the sequence is DTNDHVDKRTKIDQEA.

This sequence belongs to the SNF2/RAD54 helicase family. ISWI subfamily. Component of the ISW2 complex, which at least consists of ISW2, ITC1, DLS1 and DPB4. May form a stable subcomplex with ITC1.

It is found in the nucleus. Functionally, catalytic component of the ISW2 complex, which acts in remodeling the chromatin by catalyzing an ATP-dependent alteration in the structure of nucleosomal DNA. The ISW2 complex is involved in coordinating transcriptional repression and in inheritance of telomeric silencing. It is involved in repression of MAT a-specific genes, INO1, and early meiotic genes during mitotic growth dependent upon transcription factor UME6 and in a parallel pathway to the RPD3-SIN3 histone deacetylase complex. The sequence is that of ISWI chromatin-remodeling complex ATPase ISW2 (ISW2) from Saccharomyces cerevisiae (strain ATCC 204508 / S288c) (Baker's yeast).